The chain runs to 117 residues: RutC family protein HD_0322 (117 aa).

This sequence belongs to the RutC family.

This is RutC family protein HD_0322 from Haemophilus ducreyi (strain 35000HP / ATCC 700724).